Here is a 425-residue protein sequence, read N- to C-terminus: Glutamyl-tRNA reductase (425 aa).

Substrate contacts are provided by residues 49–52, Ser-107, 112–114, and Gln-118; these read TCNR and EPQ. Cys-50 serves as the catalytic Nucleophile. Position 187–192 (187–192) interacts with NADP(+); sequence GAGETI.

This sequence belongs to the glutamyl-tRNA reductase family. As to quaternary structure, homodimer.

It catalyses the reaction (S)-4-amino-5-oxopentanoate + tRNA(Glu) + NADP(+) = L-glutamyl-tRNA(Glu) + NADPH + H(+). Its pathway is porphyrin-containing compound metabolism; protoporphyrin-IX biosynthesis; 5-aminolevulinate from L-glutamyl-tRNA(Glu): step 1/2. Its function is as follows. Catalyzes the NADPH-dependent reduction of glutamyl-tRNA(Glu) to glutamate 1-semialdehyde (GSA). This is Glutamyl-tRNA reductase from Pseudomonas putida (strain GB-1).